A 459-amino-acid chain; its full sequence is NADH-ubiquinone oxidoreductase chain 4 (459 aa).

Helical transmembrane passes span 22–42, 60–80, 94–112, 113–133, 145–165, 196–216, 224–244, 257–277, 284–303, 308–330, 351–371, 391–411, and 435–455; these read MIWINTTTHSLIISIIPLLFF, PLTTPLLMLTTWLLPLTIMAS, LYLSMLISLQISLIMTFTA, TELIMFYIFFEATLIPTLVII, AGTYFLFYTLVGSLPLLIALI, WLAYTMAFMVKMPLYGLHLWL, PIAGSMMLAAVLLKLGGYGMM, MAYPFLALSLWGMIMTSSISL, SLIAYSSISHMALVVAAILI, SFTGAVVLMIAHGLTSSLLFCLA, LLPLMALWWLLASLANLALPP, TTLLLTGSNMLITALYSLYMF, and ILMFMHLSPILLLSLNPDIIT.

Belongs to the complex I subunit 4 family. As to quaternary structure, core subunit of respiratory chain NADH dehydrogenase (Complex I) which is composed of 45 different subunits.

It localises to the mitochondrion inner membrane. The enzyme catalyses a ubiquinone + NADH + 5 H(+)(in) = a ubiquinol + NAD(+) + 4 H(+)(out). Its function is as follows. Core subunit of the mitochondrial membrane respiratory chain NADH dehydrogenase (Complex I) which catalyzes electron transfer from NADH through the respiratory chain, using ubiquinone as an electron acceptor. Essential for the catalytic activity and assembly of complex I. This is NADH-ubiquinone oxidoreductase chain 4 (MT-ND4) from Gorilla gorilla gorilla (Western lowland gorilla).